A 267-amino-acid polypeptide reads, in one-letter code: Tryptophan synthase alpha chain (267 aa).

Residues Glu49 and Asp60 each act as proton acceptor in the active site.

This sequence belongs to the TrpA family. As to quaternary structure, tetramer of two alpha and two beta chains.

The enzyme catalyses (1S,2R)-1-C-(indol-3-yl)glycerol 3-phosphate + L-serine = D-glyceraldehyde 3-phosphate + L-tryptophan + H2O. It functions in the pathway amino-acid biosynthesis; L-tryptophan biosynthesis; L-tryptophan from chorismate: step 5/5. The alpha subunit is responsible for the aldol cleavage of indoleglycerol phosphate to indole and glyceraldehyde 3-phosphate. This chain is Tryptophan synthase alpha chain, found in Salinispora tropica (strain ATCC BAA-916 / DSM 44818 / JCM 13857 / NBRC 105044 / CNB-440).